The chain runs to 400 residues: GTPase-binding protein rid1 (400 aa).

Residues 16-27 (LSSDGLSESVNS) are compositionally biased toward polar residues. Positions 16-47 (LSSDGLSESVNSSDREDSLSFQTPSTPSEDEM) are disordered. Residues 39 to 400 (PSTPSEDEMP…PYKLVQTGST (362 aa)) enclose the GBD/FH3 domain.

The protein resides in the cytoplasm. The protein is GTPase-binding protein rid1 (rid1) of Schizosaccharomyces pombe (strain 972 / ATCC 24843) (Fission yeast).